Reading from the N-terminus, the 513-residue chain is MNKRDKALQLIKELEDNQDRPISPNLKENLENLTLLTEGCSDIVFRQFDFGNGLCGFIVYIEGIVKSEHIQDHALRPFLMHLTDQIDEHEEALQNTLSISSVALETSMSKVAASIIEGNAVLFADGHSKGLILNIKGGQRRSIEEPITESTIRGSREGFTESLRVNTALVRFRVKTFQLKMISFKIGTKTKTDVVLAYIDGLADPKVIDKAKKRIKKIKIDAVLESGYIEEFIEDDTYSPFPQLQYTERPDTVAAQLLEGRFAIFTDNTPFVLTGPITFWQLMQASEDYYERYLMSNLIRWLRYMFLFVALYLPAIYVAVITYHQDLMPTNLMFSVASAREPIPFPAIIEALIMEISFEALREAGVRLPKTIGQTVSILGALVIGTAAVEAGIVSAPMVIIVSLTGIASFTIPRFNLAISIRMLRFPLMFLASIFGIFGIMLGTIILVLHLCKLQSFGIPYLSGISPFKRDEVKDIFVRAPWWTMTRRPGTYSRGNGQKGAKREDPKDEENNI.

A run of 5 helical transmembrane segments spans residues 262 to 282, 304 to 324, 341 to 361, 382 to 402, and 429 to 449; these read FAIF…FWQL, YMFL…ITYH, EPIP…FEAL, LVIG…VIIV, and MFLA…ILVL. The segment at 489–513 is disordered; sequence PGTYSRGNGQKGAKREDPKDEENNI. Residues 501-513 show a composition bias toward basic and acidic residues; the sequence is AKREDPKDEENNI.

Belongs to the GerABKA family.

It localises to the cell membrane. This is an uncharacterized protein from Bacillus subtilis (strain 168).